Here is a 391-residue protein sequence, read N- to C-terminus: Multidrug resistance protein MdtL (391 aa).

The Cytoplasmic segment spans residues 1-3 (MSR). A helical transmembrane segment spans residues 4–24 (FLICSFALVLLYPAGIDMYLV). The Periplasmic segment spans residues 25 to 41 (GLPRIAADLNASEAQLH). Residues 42 to 62 (IAFSVYLAGMAAAMLFAGKVA) form a helical membrane-spanning segment. Residues 63-68 (DRSGRK) lie on the Cytoplasmic side of the membrane. A helical transmembrane segment spans residues 69-89 (PVAIPGAALFIIASVFCSLAE). Topologically, residues 90-92 (TST) are periplasmic. A helical membrane pass occupies residues 93 to 113 (LFLAGRFLQGLGAGCCYVVAF). Topologically, residues 114–130 (AILRDTLDDRRRAKVLS) are cytoplasmic. Residues 131 to 151 (LLNGITCIIPVLAPVLGHLIM) traverse the membrane as a helical segment. Residues 152–157 (LKFPWQ) lie on the Periplasmic side of the membrane. Residues 158 to 178 (SLFWTMAIMGIAVLMLSLFIL) form a helical membrane-spanning segment. Topologically, residues 179–198 (KETRPAAPAASDKSRENSES) are cytoplasmic. Residues 199-221 (LLNRFFLSRVVITTLSVSVILTF) form a helical membrane-spanning segment. Over 222–244 (VNTSPVLLMEIMGFERGEYATIM) the chain is Periplasmic. A helical transmembrane segment spans residues 245–265 (ALTAGVSMTVSFSTPFALGIF). Residues 266–268 (KPR) are Cytoplasmic-facing. A helical membrane pass occupies residues 269-289 (TLMITSQVLFLAAGITLAVSP). The Periplasmic portion of the chain corresponds to 290–292 (SHA). A helical transmembrane segment spans residues 293-313 (ISLFGITLICAGFSVGFGVAM). Residues 314 to 330 (SQALGPFSLRAGVASST) lie on the Cytoplasmic side of the membrane. Residues 331–351 (LGIAQVCGSSLWIWLAAVVGI) traverse the membrane as a helical segment. Residues 352-355 (GAWN) are Periplasmic-facing. The chain crosses the membrane as a helical span at residues 356–376 (MLIGILIACSIVSLLLIMFVA). The Cytoplasmic segment spans residues 377–391 (PGRPVAAHEEIHHHA).

It belongs to the major facilitator superfamily. DHA1 family. MdtL (TC 2.A.1.2.22) subfamily.

Its subcellular location is the cell inner membrane. The sequence is that of Multidrug resistance protein MdtL from Shigella dysenteriae serotype 1 (strain Sd197).